A 492-amino-acid chain; its full sequence is Glutamyl-tRNA(Gln) amidotransferase subunit A (492 aa).

Catalysis depends on charge relay system residues lysine 79 and serine 154. The Acyl-ester intermediate role is filled by serine 178.

It belongs to the amidase family. GatA subfamily. As to quaternary structure, heterotrimer of A, B and C subunits.

The enzyme catalyses L-glutamyl-tRNA(Gln) + L-glutamine + ATP + H2O = L-glutaminyl-tRNA(Gln) + L-glutamate + ADP + phosphate + H(+). Allows the formation of correctly charged Gln-tRNA(Gln) through the transamidation of misacylated Glu-tRNA(Gln) in organisms which lack glutaminyl-tRNA synthetase. The reaction takes place in the presence of glutamine and ATP through an activated gamma-phospho-Glu-tRNA(Gln). The sequence is that of Glutamyl-tRNA(Gln) amidotransferase subunit A from Acinetobacter baumannii (strain ATCC 17978 / DSM 105126 / CIP 53.77 / LMG 1025 / NCDC KC755 / 5377).